The sequence spans 292 residues: Cytidine deaminase (292 aa).

2 CMP/dCMP-type deaminase domains span residues 47 to 167 and 186 to 292; these read TTLK…FGPK and DHQD…YYSL. Residue 88–90 coordinates substrate; it reads NQE. His-101 is a Zn(2+) binding site. The active-site Proton donor is Glu-103. Zn(2+) contacts are provided by Cys-128 and Cys-131.

It belongs to the cytidine and deoxycytidylate deaminase family. In terms of assembly, homodimer. The cofactor is Zn(2+).

The enzyme catalyses cytidine + H2O + H(+) = uridine + NH4(+). It carries out the reaction 2'-deoxycytidine + H2O + H(+) = 2'-deoxyuridine + NH4(+). Functionally, this enzyme scavenges exogenous and endogenous cytidine and 2'-deoxycytidine for UMP synthesis. This chain is Cytidine deaminase, found in Haemophilus influenzae (strain ATCC 51907 / DSM 11121 / KW20 / Rd).